The chain runs to 39 residues: B melanoma antigen 4 (39 aa).

An N-terminal signal peptide occupies residues 1 to 17; that stretch reads MAAGAVFLALSAQLLQA.

It belongs to the BAGE family. Not expressed in normal tissues except in testis. Expressed in melanoma, bladder and lung carcinomas.

It is found in the secreted. Functionally, unknown. Candidate gene encoding tumor antigens. In Homo sapiens (Human), this protein is B melanoma antigen 4 (BAGE4).